The sequence spans 259 residues: Putative hydro-lyase Rxyl_2409 (259 aa).

The interval 1–24 (MGAPGAAEARERIRRGEHAGPTAG) is disordered. A compositionally biased stretch (basic and acidic residues) spans 8 to 18 (EARERIRRGEH).

Belongs to the D-glutamate cyclase family.

This chain is Putative hydro-lyase Rxyl_2409, found in Rubrobacter xylanophilus (strain DSM 9941 / JCM 11954 / NBRC 16129 / PRD-1).